A 547-amino-acid polypeptide reads, in one-letter code: CTP synthase (547 aa).

The interval 1 to 265 is amidoligase domain; sequence MARFIFITGG…DQAVLDAFQI (265 aa). CTP is bound at residue S13. S13 serves as a coordination point for UTP. Residues 14–19 and D71 contribute to the ATP site; that span reads SLGKGL. Positions 71 and 139 each coordinate Mg(2+). Residues 146–148, 186–191, and K222 contribute to the CTP site; these read DIE and KTKPTQ. UTP-binding positions include 186 to 191 and K222; that span reads KTKPTQ. One can recognise a Glutamine amidotransferase type-1 domain in the interval 291–546; that stretch reads KIAIVGKYVQ…VRAAKESSRL (256 aa). Residue G353 coordinates L-glutamine. C380 functions as the Nucleophile; for glutamine hydrolysis in the catalytic mechanism. Residues 381–384, E404, and R474 contribute to the L-glutamine site; that span reads LGMQ. Residues H519 and E521 contribute to the active site.

It belongs to the CTP synthase family. Homotetramer.

The catalysed reaction is UTP + L-glutamine + ATP + H2O = CTP + L-glutamate + ADP + phosphate + 2 H(+). It carries out the reaction L-glutamine + H2O = L-glutamate + NH4(+). It catalyses the reaction UTP + NH4(+) + ATP = CTP + ADP + phosphate + 2 H(+). It functions in the pathway pyrimidine metabolism; CTP biosynthesis via de novo pathway; CTP from UDP: step 2/2. Its activity is regulated as follows. Allosterically activated by GTP, when glutamine is the substrate; GTP has no effect on the reaction when ammonia is the substrate. The allosteric effector GTP functions by stabilizing the protein conformation that binds the tetrahedral intermediate(s) formed during glutamine hydrolysis. Inhibited by the product CTP, via allosteric rather than competitive inhibition. In terms of biological role, catalyzes the ATP-dependent amination of UTP to CTP with either L-glutamine or ammonia as the source of nitrogen. Regulates intracellular CTP levels through interactions with the four ribonucleotide triphosphates. This chain is CTP synthase, found in Ruegeria pomeroyi (strain ATCC 700808 / DSM 15171 / DSS-3) (Silicibacter pomeroyi).